A 774-amino-acid polypeptide reads, in one-letter code: Chondroitin sulfate synthase 2 (774 aa).

Over 1–15 the chain is Cytoplasmic; sequence MRASLLLSVLRPAGP. A helical; Signal-anchor for type II membrane protein membrane pass occupies residues 16-34; the sequence is VAVGISLGFTLSLLSVTWV. Over 35–774 the chain is Lumenal; the sequence is EEPCGPGPPQ…LFEQEQGNST (740 aa). Residues 37–103 form a disordered region; sequence PCGPGPPQPG…AQPGQATKKA (67 aa). Residues 54 to 67 are compositionally biased toward polar residues; it reads GNTNAARRPNSVQP. Residues N138 and N361 are each glycosylated (N-linked (GlcNAc...) asparagine). D616 contacts a divalent metal cation.

The protein belongs to the chondroitin N-acetylgalactosaminyltransferase family. Interacts with PRKN. It depends on Mn(2+) as a cofactor. The cofactor is Co(2+). In terms of tissue distribution, isoform 1, isoform 2 and isoform 3 are expressed in brain (at protein level).

The protein resides in the golgi apparatus. It is found in the golgi stack membrane. Its subcellular location is the cytoplasm. It localises to the cytosol. The protein localises to the mitochondrion. The protein resides in the mitochondrion matrix. The catalysed reaction is 3-O-(beta-D-GlcA-(1-&gt;3)-beta-D-GalNAc-(1-&gt;4)-beta-D-GlcA-(1-&gt;3)-beta-D-Gal-(1-&gt;3)-beta-D-Gal-(1-&gt;4)-beta-D-Xyl)-L-seryl-[protein] + UDP-N-acetyl-alpha-D-galactosamine = 3-O-(beta-D-GalNAc-(1-&gt;4)-beta-D-GlcA-(1-&gt;3)-beta-D-GalNAc-(1-&gt;4)-beta-D-GlcA-(1-&gt;3)-beta-D-Gal-(1-&gt;3)-beta-D-Gal-(1-&gt;4)-beta-D-Xyl)-L-seryl-[protein] + UDP + H(+). The enzyme catalyses 3-O-{beta-D-GlcA-(1-&gt;3)-[beta-D-GalNAc-(1-&gt;4)-beta-D-GlcA-(1-&gt;3)](n)-beta-D-GalNAc-(1-&gt;4)-beta-D-GlcA-(1-&gt;3)-beta-D-Gal-(1-&gt;3)-beta-D-Gal-(1-&gt;4)-beta-D-Xyl}-L-seryl-[protein] + UDP-N-acetyl-alpha-D-galactosamine = 3-O-{[beta-D-GalNAc-(1-&gt;4)-beta-D-GlcA-(1-&gt;3)](n+1)-beta-D-GalNAc-(1-&gt;4)-beta-D-GlcA-(1-&gt;3)-beta-D-Gal-(1-&gt;3)-beta-D-Gal-(1-&gt;4)-beta-D-Xyl}-L-seryl-[protein] + UDP + H(+). It catalyses the reaction 3-O-(beta-D-GalNAc-(1-&gt;4)-beta-D-GlcA-(1-&gt;3)-beta-D-Gal-(1-&gt;3)-beta-D-Gal-(1-&gt;4)-beta-D-Xyl)-L-seryl-[protein] + UDP-alpha-D-glucuronate = 3-O-(beta-D-GlcA-(1-&gt;3)-beta-D-GalNAc-(1-&gt;4)-beta-D-GlcA-(1-&gt;3)-beta-D-Gal-(1-&gt;3)-beta-D-Gal-(1-&gt;4)-beta-D-Xyl)-L-seryl-[protein] + UDP + H(+). It carries out the reaction 3-O-{[beta-D-GalNAc-(1-&gt;4)-beta-D-GlcA-(1-&gt;3)](n)-beta-D-GalNAc-(1-&gt;4)-beta-D-GlcA-(1-&gt;3)-beta-D-Gal-(1-&gt;3)-beta-D-Gal-(1-&gt;4)-beta-D-Xyl}-L-seryl-[protein] + UDP-alpha-D-glucuronate = 3-O-{beta-D-GlcA-(1-&gt;3)-[beta-D-GalNAc-(1-&gt;4)-beta-D-GlcA-(1-&gt;3)](n)-beta-D-GalNAc-(1-&gt;4)-beta-D-GlcA-(1-&gt;3)-beta-D-Gal-(1-&gt;3)-beta-D-Gal-(1-&gt;4)-beta-D-Xyl}-L-seryl-[protein] + UDP + H(+). Its function is as follows. Has both beta-1,3-glucuronic acid and beta-1,4-N-acetylgalactosamine transferase activity. Transfers glucuronic acid (GlcUA) from UDP-GlcUA and N-acetylgalactosamine (GalNAc) from UDP-GalNAc to the non-reducing end of the elongating chondroitin polymer. Seems to act as a specific activating factor for CHSY1 in chondroitin polymerization. Functionally, may facilitate PRKN transport into the mitochondria. In collaboration with PRKN, may enhance cell viability and protect cells from oxidative stress. The chain is Chondroitin sulfate synthase 2 from Mus musculus (Mouse).